We begin with the raw amino-acid sequence, 932 residues long: Protocadherin gamma-A2 (932 aa).

Positions 1-28 (MAALQKLPHCRKLVLLCFLLATLWEARA) are cleaved as a signal peptide. 6 Cadherin domains span residues 29 to 133 (GQIR…APRF), 134 to 242 (GVEE…APVF), 243 to 347 (TQPE…APEF), 348 to 452 (YMTS…APAF), 453 to 562 (SRTS…APEI), and 570 to 682 (DGST…EPSA). The Extracellular portion of the chain corresponds to 29–692 (GQIRYSVREE…IPNDSDLTLY (664 aa)). N-linked (GlcNAc...) asparagine glycans are attached at residues Asn-419 and Asn-545. N-linked (GlcNAc...) asparagine glycosylation occurs at Asn-685. A helical membrane pass occupies residues 693–713 (LVVAVAAVSCVFLAFVIVLLA). The Cytoplasmic portion of the chain corresponds to 714–932 (HRLRRWHKSR…KKKSGKKEKK (219 aa)). 2 disordered regions span residues 798 to 841 (LEEE…WPNN) and 902 to 932 (ATLTNAAGKRDGKAPAGGNGNKKKSGKKEKK). Polar residues predominate over residues 806-841 (FSQQAPPNTDWRFSQAQRPGTSGSQNGDDTGTWPNN). The segment covering 922 to 932 (NKKKSGKKEKK) has biased composition (basic residues).

The protein resides in the cell membrane. Functionally, potential calcium-dependent cell-adhesion protein. May be involved in the establishment and maintenance of specific neuronal connections in the brain. This Homo sapiens (Human) protein is Protocadherin gamma-A2 (PCDHGA2).